A 141-amino-acid chain; its full sequence is Small ribosomal subunit protein eS17w (141 aa).

The protein belongs to the eukaryotic ribosomal protein eS17 family.

The chain is Small ribosomal subunit protein eS17w (RPS17D) from Arabidopsis thaliana (Mouse-ear cress).